A 316-amino-acid chain; its full sequence is UDP-N-acetylenolpyruvoylglucosamine reductase (316 aa).

The 199-residue stretch at 27 to 225 (VGGKAERFYR…KTAINALLKK (199 aa)) folds into the FAD-binding PCMH-type domain. The active site involves R190. S239 serves as the catalytic Proton donor. The active site involves E309.

The protein belongs to the MurB family. FAD serves as cofactor.

It localises to the cytoplasm. The enzyme catalyses UDP-N-acetyl-alpha-D-muramate + NADP(+) = UDP-N-acetyl-3-O-(1-carboxyvinyl)-alpha-D-glucosamine + NADPH + H(+). It participates in cell wall biogenesis; peptidoglycan biosynthesis. Functionally, cell wall formation. The protein is UDP-N-acetylenolpyruvoylglucosamine reductase of Coxiella burnetii (strain CbuK_Q154) (Coxiella burnetii (strain Q154)).